The following is a 562-amino-acid chain: ATP-dependent RNA helicase dbp2 (562 aa).

The short motif at 132–160 (ETFDEAGFPRYVMDEVKAQGFPAPTAIQS) is the Q motif element. Residues 163–338 (WPMALSGRDV…ADFLTDFIQV (176 aa)) form the Helicase ATP-binding domain. Residue 176 to 183 (AETGSGKT) participates in ATP binding. The DEAD box motif lies at 286-289 (DEAD). The Helicase C-terminal domain occupies 370–515 (HLEKIMEGRE…QIDPRLAEMA (146 aa)). Residues 526 to 548 (GGYRGRGGGGWRGGRGGGGGGGS) form an RNA-binding RGG-box region. Over residues 536-550 (WRGGRGGGGGGGSVG) the composition is skewed to gly residues. Residues 536 to 562 (WRGGRGGGGGGGSVGGANALPLNNRRW) are disordered.

The protein belongs to the DEAD box helicase family. DDX5/DBP2 subfamily. Associates with polysomes.

It is found in the cytoplasm. It localises to the nucleus. It carries out the reaction ATP + H2O = ADP + phosphate + H(+). Functionally, ATP-dependent RNA helicase involved nonsense-mediated mRNA decay and ribosome biogenesis through rRNA processing. The chain is ATP-dependent RNA helicase dbp2 (drh-1) from Neurospora crassa (strain ATCC 24698 / 74-OR23-1A / CBS 708.71 / DSM 1257 / FGSC 987).